A 520-amino-acid chain; its full sequence is Non-specific phospholipase C6 (520 aa).

The first 31 residues, 1–31 (MKPSSASRFSLTFSHFLTLYCLLTQTHVAQG), serve as a signal peptide directing secretion.

It belongs to the bacterial phospholipase C family. In terms of tissue distribution, expressed in roots, leaves, stems, flowers and siliques.

It is found in the secreted. The chain is Non-specific phospholipase C6 (NPC6) from Arabidopsis thaliana (Mouse-ear cress).